The primary structure comprises 393 residues: Protein TsgA (393 aa).

Transmembrane regions (helical) follow at residues 11–31, 51–71, 78–98, 101–121, 134–154, 162–182, 206–226, 245–265, 273–293, 297–317, 332–352, and 361–381; these read WISF…GMVM, FLNA…EIVP, FGFL…SLAL, AAMF…TFLI, LLFT…IAAF, WYWV…LTFG, IGVL…LGFI, TLVS…SFIL, ILTV…TGTP, AWSI…IITL, FVLT…GPIV, and LLTA…LGFV.

This sequence belongs to the major facilitator superfamily. TsgA family.

The protein resides in the cell inner membrane. This is Protein TsgA from Shigella dysenteriae serotype 1 (strain Sd197).